The sequence spans 143 residues: MIRKSKKITKMRGSRTCGYGEAKKHRGAGHRGGRGNAGHQKHKWLSVCKFNPDYFGKYGFNRNPGLIKQLETINIGELEEYILKYKDAFQVEDGKVVVDATEIGFEKVLGKGRISTAMVVKAVEFSEGAKEKIEAAGGEFVEL.

Basic residues-rich tracts occupy residues 1-13 (MIRK…KMRG) and 23-38 (KKHR…GNAG). Positions 1 to 38 (MIRKSKKITKMRGSRTCGYGEAKKHRGAGHRGGRGNAG) are disordered.

The protein belongs to the universal ribosomal protein uL15 family. Part of the 50S ribosomal subunit.

In terms of biological role, binds to the 23S rRNA. This chain is Large ribosomal subunit protein uL15, found in Methanococcus maripaludis (strain C6 / ATCC BAA-1332).